A 446-amino-acid polypeptide reads, in one-letter code: MGRTYFVEEAVGRYLSDLSVKFKPYVTGLLIGQCSPQRDYIIRAARTPPKEEQKEGNTSPSKLDSIDEEWFTAHASQISRMLPGGLLVLSVFIIATPELSKDCQNTLRKLIFSIEKSLTKRRLWKPADEDVSDRAALQICSATKKIVCRTYDVQDPKGSAKPADWKYQSALSASWLSLGCTVNVNIHIPLLATSPNHDLEKNTKNGLNRWSKQIEDSIFLINGQVKDNDIELLEGQKKLRGNTHSGTQIFDVKVLTQLSQGSSHRSTATVQVCSGSINLKGAVKCRAYVHNNKPKVKEAVLALKRDIINTLSDRCEILFEDLILNEGRCKKNFERVYHVLPQRLFVPFAGSNVMLSDYKFGDEAAGEIQERFVEMLDQFVQAEDIHIAEEVNTVGICSLSEKMDDTQLEQLTKATLLLKLQQNMGVVIAVAVAVFASIFSFNYFSD.

2 consecutive transmembrane segments (helical) span residues 81–101 (MLPG…ELSK) and 424–444 (MGVV…FNYF).

The protein belongs to the ODR-4 family.

Its subcellular location is the membrane. In terms of biological role, may play a role in the trafficking of a subset of G-protein coupled receptors. In Gallus gallus (Chicken), this protein is Protein odr-4 homolog (ODR4).